A 413-amino-acid polypeptide reads, in one-letter code: Sporulation-specific protein 74 (413 aa).

Residues 1 to 87 (MGAGTLLNGL…SEHTDDFNDG (87 aa)) are disordered. The span at 69 to 83 (HENKDIHERSEHTDD) shows a compositional bias: basic and acidic residues.

In terms of assembly, interacts with itself. Interacts with MPC54, NUD1 and SPO21/MPC70.

It is found in the cytoplasm. The protein localises to the cytoskeleton. The protein resides in the microtubule organizing center. It localises to the spindle pole body. Involved in the pathway that organizes the shaping and sizing of the prospore membrane (PSM) during sporulation. Probable component of a core structural unit of the scaffold that initiates synthesis of the prospore membrane. The polypeptide is Sporulation-specific protein 74 (SPO74) (Saccharomyces cerevisiae (strain ATCC 204508 / S288c) (Baker's yeast)).